Consider the following 191-residue polypeptide: MSAKIILVFCAQALFVQSALSQCTSRATVAADRGIIGGYGLGAPYGLAYGLEAPLGLGYGLGAPCGLGGPAIDITPTIGGGLPVSSASAIAPVGLAVASENVYEGILAAAGELPFVGTVGVEGVLPTAGAGAVHHSCGNGINAMASRDAAFAPGYAGAYGIGLGAYGLGVPALEVPALGYRAGWRGCGCGL.

A signal peptide spans 1–21 (MSAKIILVFCAQALFVQSALS).

Belongs to the chorion protein family.

Its function is as follows. This protein is one of many from the eggshell of the gypsy moth. In Lymantria dispar (Gypsy moth), this protein is Chorion class B protein Ld34.